The primary structure comprises 387 residues: Probable serine/threonine-protein kinase PBL18 (387 aa).

Positions 1-37 are disordered; sequence MGNCLDSSARVGNRESTFGGSSRISRKPNQSSRLSSL. Gly2 carries N-myristoyl glycine lipidation. Residue Cys4 is the site of S-palmitoyl cysteine attachment. The span at 14-37 shows a compositional bias: polar residues; sequence RESTFGGSSRISRKPNQSSRLSSL. At Thr73 the chain carries Phosphothreonine. A Protein kinase domain is found at 84–365; that stretch reads FKPNSMIGEG…ADVLSTLQQL (282 aa). ATP is bound by residues 90–98 and Lys122; that span reads IGEGGFGCV. At Tyr167 the chain carries Phosphotyrosine. Asp215 functions as the Proton acceptor in the catalytic mechanism. A Phosphoserine modification is found at Ser219. Phosphothreonine occurs at positions 250 and 255. Tyr263 is subject to Phosphotyrosine. The disordered stretch occupies residues 368–387; the sequence is SSKKMGSTQNIVMSPSSHMS.

It belongs to the protein kinase superfamily. Ser/Thr protein kinase family.

Its subcellular location is the cell membrane. The catalysed reaction is L-seryl-[protein] + ATP = O-phospho-L-seryl-[protein] + ADP + H(+). It carries out the reaction L-threonyl-[protein] + ATP = O-phospho-L-threonyl-[protein] + ADP + H(+). Its function is as follows. May be involved in plant defense signaling. This is Probable serine/threonine-protein kinase PBL18 from Arabidopsis thaliana (Mouse-ear cress).